The sequence spans 551 residues: Cation/acetate symporter ActP (551 aa).

13 helical membrane passes run 34–54, 77–97, 104–124, 150–170, 184–204, 207–227, 263–283, 304–324, 356–376, 406–426, 430–450, 469–489, and 498–518; these read IEAI…TYWA, GLAI…SALV, GLIY…LIAE, LSAC…MVGA, VAVV…GMLA, WVQI…ALMV, ISAL…PHIL, GFIG…ILLV, FFLG…VAGL, VSKI…ILFE, IAFM…PIIF, LGLL…VTIL, and YEYP…FFSI.

Belongs to the sodium:solute symporter (SSF) (TC 2.A.21) family.

Its subcellular location is the cell inner membrane. Its function is as follows. Transports acetate. This Yersinia enterocolitica serotype O:8 / biotype 1B (strain NCTC 13174 / 8081) protein is Cation/acetate symporter ActP.